The primary structure comprises 209 residues: Uracil phosphoribosyltransferase (209 aa).

5-phospho-alpha-D-ribose 1-diphosphate contacts are provided by residues Arg-79, Arg-104, and 131-139 (DPMLATGGS). Residues Ile-194 and 199-201 (GDA) each bind uracil. Asp-200 contacts 5-phospho-alpha-D-ribose 1-diphosphate.

This sequence belongs to the UPRTase family. Mg(2+) is required as a cofactor.

It catalyses the reaction UMP + diphosphate = 5-phospho-alpha-D-ribose 1-diphosphate + uracil. The protein operates within pyrimidine metabolism; UMP biosynthesis via salvage pathway; UMP from uracil: step 1/1. Its activity is regulated as follows. Allosterically activated by GTP. Functionally, catalyzes the conversion of uracil and 5-phospho-alpha-D-ribose 1-diphosphate (PRPP) to UMP and diphosphate. The sequence is that of Uracil phosphoribosyltransferase from Bacillus licheniformis (strain ATCC 14580 / DSM 13 / JCM 2505 / CCUG 7422 / NBRC 12200 / NCIMB 9375 / NCTC 10341 / NRRL NRS-1264 / Gibson 46).